Reading from the N-terminus, the 335-residue chain is tRNA N6-adenosine threonylcarbamoyltransferase (335 aa).

A divalent metal cation is bound by residues His109, His113, and Tyr130. Residues 130–134, Asp162, Gly177, Glu181, and Asn266 contribute to the substrate site; that span reads YVSGG. Asp294 serves as a coordination point for a divalent metal cation.

Belongs to the KAE1 / TsaD family. Component of the EKC/KEOPS complex composed of at least GON7, TP53RK, TPRKB, OSGEP and LAGE3; the whole complex dimerizes. Requires a divalent metal cation as cofactor.

The protein resides in the cytoplasm. Its subcellular location is the nucleus. It catalyses the reaction L-threonylcarbamoyladenylate + adenosine(37) in tRNA = N(6)-L-threonylcarbamoyladenosine(37) in tRNA + AMP + H(+). In terms of biological role, component of the EKC/KEOPS complex that is required for the formation of a threonylcarbamoyl group on adenosine at position 37 (t(6)A37) in tRNAs that read codons beginning with adenine. The complex is probably involved in the transfer of the threonylcarbamoyl moiety of threonylcarbamoyl-AMP (TC-AMP) to the N6 group of A37. OSGEP likely plays a direct catalytic role in this reaction, but requires other protein(s) of the complex to fulfill this activity. The chain is tRNA N6-adenosine threonylcarbamoyltransferase (Osgep) from Rattus norvegicus (Rat).